Consider the following 339-residue polypeptide: MYQLFRHGIFQMDAEKAHDFTIQCLKLAGNPLFQPILKSLIHAPKGFPKTVMGVNFPNPIGLAAGADKNGDAIDGFGALGFGFLEVGTVTPVAQDGNAKPRQFRLIEAEGIINRNGFNNNGIDYLIENVKNARYKGVIGINIGKNKFTPLEQGKDDYIFCLNKAYNYAGYITVNISSPNTPDLRQLQYGDYFDDLLRSIKDRQAILANQYNKYVPIAVKIAPDLTESELVQIADTLVRHKMDGVIATNTTISRDTVMGMKNAEQQGGLSGKPLQHKSTEIIKRLHQELKGQIPIIGSGGIDGLQNAQEKIEAGAELLQVYSGLIYHGPKLVKELVKNIK.

Residues 64-68 (AGADK) and T88 each bind FMN. Residue K68 participates in substrate binding. 113–117 (NRNGF) is a binding site for substrate. FMN-binding residues include N141 and N174. N174 contributes to the substrate binding site. S177 serves as the catalytic Nucleophile. Position 179 (N179) interacts with substrate. FMN contacts are provided by K219 and T247. 248–249 (NT) provides a ligand contact to substrate. FMN contacts are provided by residues G270, G299, and 320-321 (YS).

This sequence belongs to the dihydroorotate dehydrogenase family. Type 2 subfamily. As to quaternary structure, monomer. FMN serves as cofactor.

Its subcellular location is the cell membrane. The enzyme catalyses (S)-dihydroorotate + a quinone = orotate + a quinol. The protein operates within pyrimidine metabolism; UMP biosynthesis via de novo pathway; orotate from (S)-dihydroorotate (quinone route): step 1/1. In terms of biological role, catalyzes the conversion of dihydroorotate to orotate with quinone as electron acceptor. The polypeptide is Dihydroorotate dehydrogenase (quinone) (Haemophilus influenzae (strain PittGG)).